We begin with the raw amino-acid sequence, 193 residues long: MRLCDRDIEAWLDCEKLVISPRPPIERINGATVDVRLGNQFRVFRGHTAAFIDLSGPKDEVSAALDRVMSDEIVLPEGEAFFLHPGELALAVTLESVTLPNDLVGWLDGRSSLARLGLMVHVTAHRIDPGWQGRIVLEFYNSGKLPLALRPGMLIGALSFEPLSGPAARPYNSRQDAKYRDQQGAVASRIDKD.

DCTP contacts are provided by residues 110–115 (RSSLAR), Asp128, 136–138 (VLE), Tyr171, Lys178, and Gln182. Glu138 serves as the catalytic Proton donor/acceptor. Residues 169–193 (RPYNSRQDAKYRDQQGAVASRIDKD) are disordered.

Belongs to the dCTP deaminase family. As to quaternary structure, homotrimer.

The catalysed reaction is dCTP + H2O + H(+) = dUTP + NH4(+). It functions in the pathway pyrimidine metabolism; dUMP biosynthesis; dUMP from dCTP (dUTP route): step 1/2. Catalyzes the deamination of dCTP to dUTP. The protein is dCTP deaminase of Serratia proteamaculans (strain 568).